Here is a 651-residue protein sequence, read N- to C-terminus: MIRSHERQAVAKATQPIVDREPIRSMKPGLALAALGIVFGDIGTSVLYSLQTVFSMENHAVRPTHGDVMGIISMIFWSILLVVCVKYVIFVMRADNDGEGGILALMALVRRLMASHKGTGMTALLLGIVGAGLFYGDSFITPAISVMSAVEGLTVANPDAEKIVLPASVVILTLLFIVQRRGTEVIGKAFGPVMATWFLTLAALGIPWIIHHPVIITALSPHWAILFSIERPAMAFIAMGAVVLTITGAEALYADMGHVGAPSIRLAWFGLVLPCLLINYLGQGAMILSHPDWIDNPFFRMAPDWATIPLVTIATMATVIASQAVISGAFSMSSEAARLGLLPRLGVRHTSKSEGGQIYIPEVNWTLFIGVLALILIFQTSSKLATAYGLAVTGTFLLTTSLFLVLAHRAWHWPMWALIFFGVIVGGVELSIFSANLLKIASGGWIPLLFATIVVIIMTTWRRGTAYIAKQRQDDEGPLDDFLNWMHETKPTRVPGLAVYPHPGRATTPLALLNNLRFNHVLHEHNIIISIVVENVPHVRHVNRIEKVDLGRPTDGITYIACHVGFTDSQDVPKALALAAAKCPWLKDHLDEAIYYLSLVDVKRDEPQQGAHMAGWRKMLYITMSRNQADRTRVFRIPRTRAVVMGEAVAL.

12 helical membrane-spanning segments follow: residues 30–50 (LALA…LYSL), 71–91 (IISM…VIFV), 124–144 (LLLG…TPAI), 158–178 (PDAE…LFIV), 190–210 (FGPV…PWII), 233–253 (AMAF…EALY), 268–288 (WFGL…AMIL), 310–330 (LVTI…SGAF), 358–378 (IYIP…ILIF), 387–407 (AYGL…LVLA), 413–433 (WPMW…LSIF), and 437–457 (LLKI…VVII).

It belongs to the HAK/KUP transporter (TC 2.A.72) family.

Its subcellular location is the cell membrane. It catalyses the reaction K(+)(in) + H(+)(in) = K(+)(out) + H(+)(out). Transport of potassium into the cell. Likely operates as a K(+):H(+) symporter. This is Probable potassium transport system protein Kup from Cutibacterium acnes (strain DSM 16379 / KPA171202) (Propionibacterium acnes).